Consider the following 400-residue polypeptide: Cytochrome P450 BJ-1 homolog (400 aa).

Cys349 contacts heme.

Belongs to the cytochrome P450 family. It depends on heme as a cofactor.

Cytochromes P450 are a group of heme-thiolate monooxygenases. They oxidize a variety of structurally unrelated compounds, including steroids, fatty acids, and xenobiotics. This is Cytochrome P450 BJ-1 homolog (cyp112A2) from Sinorhizobium fredii (strain NBRC 101917 / NGR234).